Consider the following 297-residue polypeptide: 4-diphosphocytidyl-2-C-methyl-D-erythritol kinase (297 aa).

Residues lysine 6 and aspartate 144 contribute to the active site.

The protein belongs to the GHMP kinase family. IspE subfamily.

The catalysed reaction is 4-CDP-2-C-methyl-D-erythritol + ATP = 4-CDP-2-C-methyl-D-erythritol 2-phosphate + ADP + H(+). Its pathway is isoprenoid biosynthesis; isopentenyl diphosphate biosynthesis via DXP pathway; isopentenyl diphosphate from 1-deoxy-D-xylulose 5-phosphate: step 3/6. Functionally, catalyzes the phosphorylation of the position 2 hydroxy group of 4-diphosphocytidyl-2C-methyl-D-erythritol. The sequence is that of 4-diphosphocytidyl-2-C-methyl-D-erythritol kinase from Leptospira interrogans serogroup Icterohaemorrhagiae serovar copenhageni (strain Fiocruz L1-130).